The chain runs to 168 residues: Lipoprotein signal peptidase (168 aa).

The next 3 membrane-spanning stretches (helical) occupy residues 8-28 (TLLV…VVLL), 70-90 (KYFL…YLFF), and 104-124 (VLLC…GHIV). Residues aspartate 125 and aspartate 143 contribute to the active site. A helical transmembrane segment spans residues 134–154 (WAFPTFNVADVLISLGTLLLV).

This sequence belongs to the peptidase A8 family.

It is found in the cell inner membrane. The catalysed reaction is Release of signal peptides from bacterial membrane prolipoproteins. Hydrolyzes -Xaa-Yaa-Zaa-|-(S,diacylglyceryl)Cys-, in which Xaa is hydrophobic (preferably Leu), and Yaa (Ala or Ser) and Zaa (Gly or Ala) have small, neutral side chains.. Its pathway is protein modification; lipoprotein biosynthesis (signal peptide cleavage). Its function is as follows. This protein specifically catalyzes the removal of signal peptides from prolipoproteins. This is Lipoprotein signal peptidase from Chlamydia pneumoniae (Chlamydophila pneumoniae).